The sequence spans 311 residues: Aspartate carbamoyltransferase catalytic subunit (311 aa).

Positions 55 and 56 each coordinate carbamoyl phosphate. Residue lysine 84 participates in L-aspartate binding. 3 residues coordinate carbamoyl phosphate: arginine 105, histidine 133, and glutamine 136. Positions 166 and 229 each coordinate L-aspartate. Carbamoyl phosphate is bound by residues leucine 268 and proline 269.

This sequence belongs to the aspartate/ornithine carbamoyltransferase superfamily. ATCase family. Heterododecamer (2C3:3R2) of six catalytic PyrB chains organized as two trimers (C3), and six regulatory PyrI chains organized as three dimers (R2).

It carries out the reaction carbamoyl phosphate + L-aspartate = N-carbamoyl-L-aspartate + phosphate + H(+). The protein operates within pyrimidine metabolism; UMP biosynthesis via de novo pathway; (S)-dihydroorotate from bicarbonate: step 2/3. Its function is as follows. Catalyzes the condensation of carbamoyl phosphate and aspartate to form carbamoyl aspartate and inorganic phosphate, the committed step in the de novo pyrimidine nucleotide biosynthesis pathway. This Alkaliphilus metalliredigens (strain QYMF) protein is Aspartate carbamoyltransferase catalytic subunit.